A 163-amino-acid polypeptide reads, in one-letter code: Beta-lactoglobulin-2 (163 aa).

2 disulfide bridges follow: Cys-66–Cys-161 and Cys-106–Cys-120.

It belongs to the calycin superfamily. Lipocalin family. Monomer.

Its subcellular location is the secreted. Functionally, lactoglobulin is the primary component of whey, it binds retinol and is probably involved in the transport of that molecule. This chain is Beta-lactoglobulin-2 (LGB2), found in Equus asinus (Donkey).